The chain runs to 323 residues: Methenyltetrahydromethanopterin cyclohydrolase (323 aa).

The protein belongs to the MCH family.

The protein resides in the cytoplasm. It carries out the reaction 5,10-methenyl-5,6,7,8-tetrahydromethanopterin + H2O = N(5)-formyl-5,6,7,8-tetrahydromethanopterin + H(+). It participates in one-carbon metabolism; methanogenesis from CO(2); 5,10-methenyl-5,6,7,8-tetrahydromethanopterin from CO(2): step 3/3. In terms of biological role, catalyzes the reversible interconversion of 5-formyl-H(4)MPT to methenyl-H(4)MPT(+). The sequence is that of Methenyltetrahydromethanopterin cyclohydrolase from Methanococcus maripaludis (strain C5 / ATCC BAA-1333).